Consider the following 420-residue polypeptide: Histidine--tRNA ligase (420 aa).

Belongs to the class-II aminoacyl-tRNA synthetase family. Homodimer.

The protein resides in the cytoplasm. The enzyme catalyses tRNA(His) + L-histidine + ATP = L-histidyl-tRNA(His) + AMP + diphosphate + H(+). The polypeptide is Histidine--tRNA ligase (hisS) (Thermotoga maritima (strain ATCC 43589 / DSM 3109 / JCM 10099 / NBRC 100826 / MSB8)).